Here is a 594-residue protein sequence, read N- to C-terminus: Alanine--tRNA ligase (594 aa).

Residues His456, His460, Cys558, and His562 each contribute to the Zn(2+) site.

The protein belongs to the class-II aminoacyl-tRNA synthetase family. Zn(2+) serves as cofactor.

Its subcellular location is the cytoplasm. The catalysed reaction is tRNA(Ala) + L-alanine + ATP = L-alanyl-tRNA(Ala) + AMP + diphosphate. Functionally, catalyzes the attachment of alanine to tRNA(Ala) in a two-step reaction: alanine is first activated by ATP to form Ala-AMP and then transferred to the acceptor end of tRNA(Ala). Also edits incorrectly charged Ser-tRNA(Ala) and Gly-tRNA(Ala) via its editing domain. This chain is Alanine--tRNA ligase (alaS), found in Borrelia garinii subsp. bavariensis (strain ATCC BAA-2496 / DSM 23469 / PBi) (Borreliella bavariensis).